Here is a 348-residue protein sequence, read N- to C-terminus: MINIDGSYGEGGGQVLRTSLSLAAITGEPIRIAGIRAGRRKPGLAAQHLTAVRAAARICHGELQGDALGSTMLEFIPGGGVKAGNYIFDVSEVQQGGSAGAITLVLQTILLPLALADGDSHITLRGGTHVIFSPTVTYIERVYLPMLCRMGIKAQVKLGAWGWYPRGGGEVNLQVKGGCQLCGLNLLERGELKRVQGLAVATELPAHIPQRMANRAENLLRTAGLRVSMQALREKGVAPGAGIFLTAEYCNSLTGFGGFGRLRLSSEKVAEIACGQLLQFHETGAPVDEHLADQLLLPAVLASESSQYKVAEVSTHLTTNAAVIEKFGLGKITVNQAERVVAIASSKV.

ATP-binding positions include glutamine 107 and 290–294; that span reads HLADQ. The active-site Tele-AMP-histidine intermediate is histidine 316.

It belongs to the RNA 3'-terminal cyclase family. Type 1 subfamily.

It is found in the cytoplasm. The enzyme catalyses a 3'-end 3'-phospho-ribonucleotide-RNA + ATP = a 3'-end 2',3'-cyclophospho-ribonucleotide-RNA + AMP + diphosphate. Functionally, catalyzes the conversion of 3'-phosphate to a 2',3'-cyclic phosphodiester at the end of RNA. The mechanism of action of the enzyme occurs in 3 steps: (A) adenylation of the enzyme by ATP; (B) transfer of adenylate to an RNA-N3'P to produce RNA-N3'PP5'A; (C) and attack of the adjacent 2'-hydroxyl on the 3'-phosphorus in the diester linkage to produce the cyclic end product. The biological role of this enzyme is unknown but it is likely to function in some aspects of cellular RNA processing. In Nostoc sp. (strain PCC 7120 / SAG 25.82 / UTEX 2576), this protein is RNA 3'-terminal phosphate cyclase (rtcA).